Consider the following 362-residue polypeptide: Histidine protein methyltransferase 1 homolog (362 aa).

The interval Thr18–Lys88 is disordered. Residues Gln30 to Trp51 are compositionally biased toward basic and acidic residues. The span at Lys52 to Thr65 shows a compositional bias: polar residues. Phosphoserine occurs at positions 62 and 67. Residues Asp73 to Lys82 are compositionally biased toward basic and acidic residues. His144 bears the Tele-methylhistidine mark. S-adenosyl-L-methionine is bound by residues Ile158–Thr162, Gly185, and Gln206–Tyr208. The Nuclear localization signal motif lies at Pro237–Arg243. Residues Gly259 to Trp261 and Ser283 each bind S-adenosyl-L-methionine.

It belongs to the methyltransferase superfamily. METTL18 family. As to quaternary structure, interacts with GRWD1 and members of the heat shock protein 90 and 70 families; these proteins may possibly be methylation substrates for the enzyme. In terms of processing, monomethylated at His-144 through automethylation. Automethylation at His-144 positively regulates the methyltransferase activity toward RPL3. Probably methylated on other residues.

It localises to the cytoplasm. The protein localises to the cytosol. It is found in the nucleus. Its subcellular location is the nucleolus. The enzyme catalyses L-histidyl-[protein] + S-adenosyl-L-methionine = N(tele)-methyl-L-histidyl-[protein] + S-adenosyl-L-homocysteine + H(+). In terms of biological role, protein-L-histidine N-tele-methyltransferase that specifically monomethylates RPL3, thereby regulating translation elongation. Histidine methylation of RPL3 regulates translation elongation by slowing ribosome traversal on tyrosine codons: slower elongation provides enough time for proper folding of synthesized proteins and prevents cellular aggregation of tyrosine-rich proteins. The polypeptide is Histidine protein methyltransferase 1 homolog (Mus musculus (Mouse)).